Reading from the N-terminus, the 461-residue chain is Trimethylamine monooxygenase (461 aa).

7 residues coordinate FAD: Ser-14, Glu-39, Lys-40, Gln-41, Met-47, Trp-48, and His-64. 2 residues coordinate NADP(+): Trp-72 and Asn-74. Positions 74 and 127 each coordinate FAD. NADP(+) contacts are provided by Ser-206, Ser-207, Ser-209, Arg-230, and Thr-231. FAD contacts are provided by Gln-319 and Thr-322. Arg-413 provides a ligand contact to NADP(+).

It belongs to the FMO family. The cofactor is FAD.

It catalyses the reaction trimethylamine + NADPH + O2 = trimethylamine N-oxide + NADP(+) + H2O. In terms of biological role, catalyzes the oxidation of trimethylamine (TMA) to produce trimethylamine N-oxide (TMAO). The produced TMAO is accumulated in the cell, functioning as a piezolyte, improving both growth and survival at high hydrostatic pressure (HHP). The chain is Trimethylamine monooxygenase from Myroides profundi.